The chain runs to 446 residues: Pre-rRNA-processing protein crb3/ipi3 (446 aa).

WD repeat units lie at residues 74 to 113, 116 to 155, 172 to 214, 216 to 257, and 294 to 333; these read ILPEILICVQSSPCGSWLAAGTEKGNLYIWSLKSGALIYF, AHYQPLTILKFSNDGMVLFTASNDGDVFAWLISTLVDQNS, GHKR…LLTT, ALPS…SNNV, and SCQSPITTLTVSFDASLLISGDKDGNVLVWDSVSRQVLRR.

It belongs to the WD repeat IPI3/WDR18 family. Component of the RIX1 complex, composed of ipi1, rix1/ipi2 and crb3/ipi3 in a 1:2:2 stoichiometry. The complex interacts (via rix1) with mdn1 (via its hexameric AAA ATPase ring) and the pre-60S ribosome particles. Interacts with rix1, gcr3 and Las1.

It localises to the nucleus. Its subcellular location is the chromosome. In terms of biological role, required for both pre-rRNA processing and heterochromatic gene silencing. Functionally, component of the RIX1 complex required for processing of ITS2 sequences from 35S pre-rRNA. In Schizosaccharomyces pombe (strain 972 / ATCC 24843) (Fission yeast), this protein is Pre-rRNA-processing protein crb3/ipi3 (crb3).